Consider the following 247-residue polypeptide: Small ribosomal subunit protein uS3 (247 aa).

Residues 39–107 (VRDYLRKKLD…PAQVNIEEIT (69 aa)) enclose the KH type-2 domain. A disordered region spans residues 213 to 247 (SVYNPPKEDKTRAPKRRGRSNSNRRNSDRANTDRG). Basic and acidic residues predominate over residues 237-247 (RNSDRANTDRG).

It belongs to the universal ribosomal protein uS3 family. In terms of assembly, part of the 30S ribosomal subunit. Forms a tight complex with proteins S10 and S14.

Functionally, binds the lower part of the 30S subunit head. Binds mRNA in the 70S ribosome, positioning it for translation. In Psychrobacter sp. (strain PRwf-1), this protein is Small ribosomal subunit protein uS3.